A 495-amino-acid chain; its full sequence is Transcription termination/antitermination protein NusA (495 aa).

The S1 motif domain maps to 135 to 200; that stretch reads GKIVTGTVKK…KTAQLFVTRS (66 aa). In terms of domain architecture, KH spans 302-374; the sequence is NHSMDIAVEA…LDEEFAQILV (73 aa).

Belongs to the NusA family. Monomer. Binds directly to the core enzyme of the DNA-dependent RNA polymerase and to nascent RNA.

The protein localises to the cytoplasm. Its function is as follows. Participates in both transcription termination and antitermination. The sequence is that of Transcription termination/antitermination protein NusA from Haemophilus influenzae (strain ATCC 51907 / DSM 11121 / KW20 / Rd).